We begin with the raw amino-acid sequence, 658 residues long: Vertnin (658 aa).

This sequence belongs to the vertnin family.

It is found in the nucleus. Acts as a transcription factor that regulates development of thoracic vertebrae. The protein is Vertnin (VRTN) of Bos taurus (Bovine).